The following is a 678-amino-acid chain: Geranylgeranyl transferase type-2 subunit alpha 1 (678 aa).

PFTA repeat units follow at residues 40 to 74, 86 to 120, 121 to 155, 156 to 190, and 201 to 235; these read YTNE…DRLA, ILDE…KGHS, SVGN…LTNR, SEQD…SLLA, and KIPE…QTLN. LRR repeat units follow at residues 510-532, 533-554, 555-578, 580-604, and 638-663; these read MNNL…VEKL, LFVQ…LEAM, QLLS…SLRH, KQLK…RYLC, and DLNL…VLQV.

This sequence belongs to the protein prenyltransferase subunit alpha family. Heterotrimer composed of the alpha subunit RGTA, the beta subunit RGTB and REP; within this trimer, RGTA and RGTB form the catalytic component, while REP mediates peptide substrate binding.

It catalyses the reaction geranylgeranyl diphosphate + L-cysteinyl-[protein] = S-geranylgeranyl-L-cysteinyl-[protein] + diphosphate. With respect to regulation, the enzymatic reaction requires the aid of the Rab escort protein REP. In terms of biological role, catalyzes the transfer of a geranylgeranyl moiety from geranylgeranyl diphosphate to both cysteines of Rab proteins with the C-terminal sequence -CCXX, CXXX, -XCCX and -XCXC, such as RABA1A, RABA2A, RABF2A and RABG2. In vitro, can prenylate PGGTI targets with the C-terminal Cys-aliphatic-aliphatic-X (CaaX) with leucine in the terminal position. Substrates with the C-terminal sequence -CSIL such as ARAC11/ROP1 or GG2/AGG2 are prenylated independently of REP and when the alpha subunit is associated with a beta subunit (RGTB1 or RGTB2). This is Geranylgeranyl transferase type-2 subunit alpha 1 from Arabidopsis thaliana (Mouse-ear cress).